A 426-amino-acid polypeptide reads, in one-letter code: Histidine--tRNA ligase (426 aa).

The protein belongs to the class-II aminoacyl-tRNA synthetase family.

The protein resides in the cytoplasm. The catalysed reaction is tRNA(His) + L-histidine + ATP = L-histidyl-tRNA(His) + AMP + diphosphate + H(+). This chain is Histidine--tRNA ligase, found in Saccharolobus shibatae (strain ATCC 51178 / DSM 5389 / JCM 8931 / NBRC 15437 / B12) (Sulfolobus shibatae).